A 109-amino-acid chain; its full sequence is uncharacterized protein (109 aa).

The N-terminal stretch at 1–23 (MKNYNFILISLFIIFFIILNISS) is a signal peptide. Residue Asn-27 is glycosylated (N-linked (GlcNAc...) asparagine). The tract at residues 45–109 (YQEYMENRTP…KKDQQNQQQN (65 aa)) is disordered. The span at 54–72 (PNEQQQQQQQQQNNNNPPQ) shows a compositional bias: low complexity. The segment covering 94–103 (KLKEKLKKDQ) has biased composition (basic and acidic residues).

The protein localises to the secreted. This is an uncharacterized protein from Dictyostelium discoideum (Social amoeba).